The chain runs to 814 residues: Putative E3 ubiquitin-protein ligase RF298 (814 aa).

Disordered regions lie at residues 1–51 (MVEK…ASLT), 221–301 (SVSN…TKSA), and 411–441 (ALPANNAPAPVASEKKSGSEPEEKPSVSTKP). Positions 221-231 (SVSNASKSSES) are enriched in low complexity. Over residues 289–301 (SVSTASGEGTKSA) the composition is skewed to polar residues. The span at 423–435 (SEKKSGSEPEEKP) shows a compositional bias: basic and acidic residues. The stretch at 506–710 (ELKALRKEKE…KLKSDSLKIA (205 aa)) forms a coiled coil. The RING-type zinc-finger motif lies at 760-800 (CVMCLSEEMSVIFLPCAHQVLCSKCNQLHEKEAMEDCPSCR).

This sequence belongs to the RING-type zinc finger family.

It carries out the reaction S-ubiquitinyl-[E2 ubiquitin-conjugating enzyme]-L-cysteine + [acceptor protein]-L-lysine = [E2 ubiquitin-conjugating enzyme]-L-cysteine + N(6)-ubiquitinyl-[acceptor protein]-L-lysine.. It participates in protein modification; protein ubiquitination. This Arabidopsis thaliana (Mouse-ear cress) protein is Putative E3 ubiquitin-protein ligase RF298 (RF298).